The sequence spans 1753 residues: Negative regulator of sporulation PMD1 (1753 aa).

Kelch repeat units follow at residues 143 to 198 and 206 to 253; these read NIYI…VLNE and KLII…KILV. Position 298 is a phosphothreonine (Thr-298). Polar residues predominate over residues 651–664; that stretch reads TTKFGNSSQSSNGS. Disordered regions lie at residues 651-753 and 771-807; these read TTKF…TTCS and LGLSEQSGRSTRASSVSPPPVYKKSTNDGNDSNCTLS. Residues 670 to 683 show a composition bias toward low complexity; sequence SKNGNSKSNSNTSL. Polar residues-rich tracts occupy residues 690–699, 740–753, 774–783, and 797–807; these read DFTSSTSSPK, TGTSNKRPISTTCS, SEQSGRSTRA, and NDGNDSNCTLS. Ser-838 is subject to Phosphoserine. 3 disordered regions span residues 875 to 915, 938 to 957, and 962 to 988; these read IASP…LGSS, PLEPLPPVPKAPSRRSSSLA, and FGRDSPVASRRSSHSTRKSSSSDARRI. Residues 880-900 show a composition bias toward low complexity; that stretch reads QSRQTSFASTASTASVVSSTS. Residues 938-947 are compositionally biased toward pro residues; it reads PLEPLPPVPK. Residues 979–988 show a composition bias toward low complexity; sequence KSSSSDARRI. Ser-1289, Ser-1307, and Ser-1356 each carry phosphoserine. Disordered regions lie at residues 1312 to 1467, 1604 to 1686, and 1706 to 1753; these read SPAT…DLDS, PIFA…NKRF, and SAVN…GKRR. The segment covering 1344 to 1379 has biased composition (polar residues); that stretch reads VSRQQNFPRRSSSFTETVPTEPTRYNYQNLDSSKSN. Residues 1399–1430 are compositionally biased toward basic and acidic residues; the sequence is NFDKYKVETLQKRNSNDGKDLDRTNDPLKNRG. Residues 1653 to 1677 show a composition bias toward polar residues; the sequence is IKFSQAPSTQISPRTSVTDFTASQQ. The residue at position 1664 (Ser-1664) is a Phosphoserine. Residues 1711 to 1723 show a composition bias toward basic and acidic residues; it reads GRKESEGHCEDRS.

The protein resides in the cytoplasm. In terms of biological role, negatively regulates early sporulation-specific genes. Seems to exert its function by positively regulating the Ras/cAMP pathway. Required for growth under alkaline conditions. Acts synergetically with MDS3. The chain is Negative regulator of sporulation PMD1 (PMD1) from Saccharomyces cerevisiae (strain ATCC 204508 / S288c) (Baker's yeast).